Consider the following 330-residue polypeptide: MADIIARLREDGIQKRVIQEGRGELPDFQDGTKATFHYRTLHSDDEGTVLDDSRARGKPMELIIGKKFKLPVWETIVCTMREGEIAQFLCDIKHVVLYPLVAKSLRNIAVGKDPLEGQRHCCGVAQMREHSSLGHADLDALQQNPQPLIFHMEMLKVESPGTYQQDPWAMTDEEKAKAVPLIHQEGNRLYREGHVKEAAAKYYDAIACLKNLQMKEQPGSPEWIQLDQQITPLLLNYCQCKLVVEEYYEVLDHCSSILNKYDDNVKAYFKRGKAHAAVWNAQEAQADFAKVLELDPALAPVVSRELRALEARIRQKDEEDKARFRGIFSH.

The PPIase FKBP-type domain maps to 31–121 (GTKATFHYRT…KDPLEGQRHC (91 aa)). S43 carries the post-translational modification Phosphoserine. TPR repeat units follow at residues 179 to 212 (VPLI…LKNL), 231 to 264 (TPLL…YDDN), and 265 to 298 (VKAY…DPAL).

Interacts with RET in the pituitary gland; this interaction prevents the formation of the AIP-survivin complex. In terms of tissue distribution, widely expressed. Higher levels seen in the heart, placenta and skeletal muscle. Not expressed in the liver.

Its subcellular location is the cytoplasm. Its function is as follows. May play a positive role in AHR-mediated (aromatic hydrocarbon receptor) signaling, possibly by influencing its receptivity for ligand and/or its nuclear targeting. In terms of biological role, cellular negative regulator of the hepatitis B virus (HBV) X protein. The polypeptide is AH receptor-interacting protein (AIP) (Homo sapiens (Human)).